Reading from the N-terminus, the 157-residue chain is MIILGIDPALGSLGWAVVAKETAQLKYLASGIIKTNSKDAIHHRLAFINSTLEKVILEYQPNMAAIEETFVNTNSVTSLKLGYARGAIMSLIGRYNLDMREFKPNTVKKTVTGYGHAEKDQILHMIKLLLPGTFLITNSDEADAVAIAYTCLVTKNY.

Catalysis depends on residues D7, E67, and D140. Mg(2+) contacts are provided by D7, E67, and D140.

The protein belongs to the RuvC family. Homodimer which binds Holliday junction (HJ) DNA. The HJ becomes 2-fold symmetrical on binding to RuvC with unstacked arms; it has a different conformation from HJ DNA in complex with RuvA. In the full resolvosome a probable DNA-RuvA(4)-RuvB(12)-RuvC(2) complex forms which resolves the HJ. Mg(2+) serves as cofactor.

It is found in the cytoplasm. The catalysed reaction is Endonucleolytic cleavage at a junction such as a reciprocal single-stranded crossover between two homologous DNA duplexes (Holliday junction).. Functionally, the RuvA-RuvB-RuvC complex processes Holliday junction (HJ) DNA during genetic recombination and DNA repair. Endonuclease that resolves HJ intermediates. Cleaves cruciform DNA by making single-stranded nicks across the HJ at symmetrical positions within the homologous arms, yielding a 5'-phosphate and a 3'-hydroxyl group; requires a central core of homology in the junction. The consensus cleavage sequence is 5'-(A/T)TT(C/G)-3'. Cleavage occurs on the 3'-side of the TT dinucleotide at the point of strand exchange. HJ branch migration catalyzed by RuvA-RuvB allows RuvC to scan DNA until it finds its consensus sequence, where it cleaves and resolves the cruciform DNA. The protein is Crossover junction endodeoxyribonuclease RuvC of Rickettsia massiliae (strain Mtu5).